The primary structure comprises 343 residues: N-acetyl-gamma-glutamyl-phosphate reductase (343 aa).

The active site involves C147.

This sequence belongs to the NAGSA dehydrogenase family. Type 1 subfamily.

The protein localises to the cytoplasm. The enzyme catalyses N-acetyl-L-glutamate 5-semialdehyde + phosphate + NADP(+) = N-acetyl-L-glutamyl 5-phosphate + NADPH + H(+). It participates in amino-acid biosynthesis; L-arginine biosynthesis; N(2)-acetyl-L-ornithine from L-glutamate: step 3/4. Catalyzes the NADPH-dependent reduction of N-acetyl-5-glutamyl phosphate to yield N-acetyl-L-glutamate 5-semialdehyde. In Listeria monocytogenes serotype 4a (strain HCC23), this protein is N-acetyl-gamma-glutamyl-phosphate reductase.